Reading from the N-terminus, the 543-residue chain is Chaperonin GroEL (543 aa).

Residues 29–32, 86–90, Gly-413, 477–479, and Asp-493 contribute to the ATP site; these read TLGP, DGTTT, and DAL.

It belongs to the chaperonin (HSP60) family. In terms of assembly, forms a cylinder of 14 subunits composed of two heptameric rings stacked back-to-back. Interacts with the co-chaperonin GroES.

The protein localises to the cytoplasm. It carries out the reaction ATP + H2O + a folded polypeptide = ADP + phosphate + an unfolded polypeptide.. Together with its co-chaperonin GroES, plays an essential role in assisting protein folding. The GroEL-GroES system forms a nano-cage that allows encapsulation of the non-native substrate proteins and provides a physical environment optimized to promote and accelerate protein folding. This is Chaperonin GroEL from Clostridium novyi (strain NT).